A 169-amino-acid chain; its full sequence is Phosphopantetheine adenylyltransferase (169 aa).

Position 10 (Ser10) interacts with substrate. Residues 10-11 (SF) and His18 contribute to the ATP site. Positions 42, 79, and 93 each coordinate substrate. ATP is bound by residues 94–96 (GLR), Glu104, and 129–135 (VRPITAT).

Belongs to the bacterial CoaD family. As to quaternary structure, homohexamer. It depends on Mg(2+) as a cofactor.

It is found in the cytoplasm. It catalyses the reaction (R)-4'-phosphopantetheine + ATP + H(+) = 3'-dephospho-CoA + diphosphate. It participates in cofactor biosynthesis; coenzyme A biosynthesis; CoA from (R)-pantothenate: step 4/5. Reversibly transfers an adenylyl group from ATP to 4'-phosphopantetheine, yielding dephospho-CoA (dPCoA) and pyrophosphate. This is Phosphopantetheine adenylyltransferase from Rhodopseudomonas palustris (strain ATCC BAA-98 / CGA009).